Reading from the N-terminus, the 299-residue chain is Very long chain fatty acid elongase 5 (299 aa).

Methionine 1 carries the post-translational modification N-acetylmethionine. 7 helical membrane-spanning segments follow: residues 26-46 (WFLLDNYVPTLVCSILYLLIV), 64-84 (ILVVYNLGLTLLSLYMFCELV), 112-132 (VLWWYYFSKLIEFMDTFFFIL), 139-158 (ITVLHVYHHASMLNIWWFVM), 168-187 (FGATLNSFIHVLMYSYYGLS), 205-225 (GQLLQFVLTIIQTSCGVIWPC), and 226-246 (TFPLGWLYFQIGYMISLITLF). Position 285 is a phosphoserine (serine 285).

The protein belongs to the ELO family. ELOVL5 subfamily. In terms of assembly, interacts with TECR.

The protein localises to the endoplasmic reticulum membrane. Its subcellular location is the cell projection. The protein resides in the dendrite. It catalyses the reaction a very-long-chain acyl-CoA + malonyl-CoA + H(+) = a very-long-chain 3-oxoacyl-CoA + CO2 + CoA. It carries out the reaction (6Z,9Z,12Z)-octadecatrienoyl-CoA + malonyl-CoA + H(+) = (8Z,11Z,14Z)-3-oxoeicosatrienoyl-CoA + CO2 + CoA. The catalysed reaction is (9Z,12Z,15Z)-octadecatrienoyl-CoA + malonyl-CoA + H(+) = (11Z,14Z,17Z)-3-oxoeicosatrienoyl-CoA + CO2 + CoA. The enzyme catalyses (9Z)-hexadecenoyl-CoA + malonyl-CoA + H(+) = 3-oxo-(11Z)-octadecenoyl-CoA + CO2 + CoA. It catalyses the reaction (9Z)-octadecenoyl-CoA + malonyl-CoA + H(+) = 3-oxo-(11Z)-eicosenoyl-CoA + CO2 + CoA. It carries out the reaction (11Z)-octadecenoyl-CoA + malonyl-CoA + H(+) = 3-oxo-(13Z)-eicosenoyl-CoA + CO2 + CoA. The catalysed reaction is (9Z,12Z)-octadecadienoyl-CoA + malonyl-CoA + H(+) = (11Z,14Z)-3-oxoicosa-11,14-dienoyl-CoA + CO2 + CoA. The enzyme catalyses (6Z,9Z,12Z,15Z)-octadecatetraenoyl-CoA + malonyl-CoA + H(+) = (8Z,11Z,14Z,17Z)-3-oxoicosatetraenoyl-CoA + CO2 + CoA. It catalyses the reaction (5Z,8Z,11Z,14Z)-eicosatetraenoyl-CoA + malonyl-CoA + H(+) = (7Z,10Z,13Z,16Z)-3-oxodocosatetraenoyl-CoA + CO2 + CoA. It carries out the reaction (5Z,8Z,11Z,14Z,17Z)-eicosapentaenoyl-CoA + malonyl-CoA + H(+) = 3-oxo-(7Z,10Z,13Z,16Z,19Z)-docosapentaenoyl-CoA + CO2 + CoA. The protein operates within lipid metabolism; polyunsaturated fatty acid biosynthesis. Catalyzes the first and rate-limiting reaction of the four reactions that constitute the long-chain fatty acids elongation cycle. This endoplasmic reticulum-bound enzymatic process allows the addition of 2 carbons to the chain of long- and very long-chain fatty acids (VLCFAs) per cycle. Condensing enzyme that acts specifically toward polyunsaturated acyl-CoA with the higher activity toward C18:3(n-6) acyl-CoA. May participate in the production of monounsaturated and of polyunsaturated VLCFAs of different chain lengths that are involved in multiple biological processes as precursors of membrane lipids and lipid mediators. In conditions where the essential linoleic and alpha linoleic fatty acids are lacking it is also involved in the synthesis of Mead acid from oleic acid. The protein is Very long chain fatty acid elongase 5 of Bos taurus (Bovine).